Reading from the N-terminus, the 201-residue chain is Holliday junction branch migration complex subunit RuvA (201 aa).

The interval 1 to 61 (MIEFVKGTID…EDAFSLYGFS (61 aa)) is domain I. Residues 62 to 140 (TREEKALFTK…DVVPEMIDNL (79 aa)) are domain II. Residues 141-150 (FNHEARIEKQ) form a flexible linker region. The interval 151–201 (EAETALDEALEALRVLGYAEKEIKKVLPHLKEETALSTDQYVKKALQKLLK) is domain III.

Belongs to the RuvA family. In terms of assembly, homotetramer. Forms an RuvA(8)-RuvB(12)-Holliday junction (HJ) complex. HJ DNA is sandwiched between 2 RuvA tetramers; dsDNA enters through RuvA and exits via RuvB. An RuvB hexamer assembles on each DNA strand where it exits the tetramer. Each RuvB hexamer is contacted by two RuvA subunits (via domain III) on 2 adjacent RuvB subunits; this complex drives branch migration. In the full resolvosome a probable DNA-RuvA(4)-RuvB(12)-RuvC(2) complex forms which resolves the HJ.

It is found in the cytoplasm. In terms of biological role, the RuvA-RuvB-RuvC complex processes Holliday junction (HJ) DNA during genetic recombination and DNA repair, while the RuvA-RuvB complex plays an important role in the rescue of blocked DNA replication forks via replication fork reversal (RFR). RuvA specifically binds to HJ cruciform DNA, conferring on it an open structure. The RuvB hexamer acts as an ATP-dependent pump, pulling dsDNA into and through the RuvAB complex. HJ branch migration allows RuvC to scan DNA until it finds its consensus sequence, where it cleaves and resolves the cruciform DNA. This is Holliday junction branch migration complex subunit RuvA from Bacillus velezensis (strain DSM 23117 / BGSC 10A6 / LMG 26770 / FZB42) (Bacillus amyloliquefaciens subsp. plantarum).